The chain runs to 104 residues: MTYAIIEASGTQLWIEEGRYYDLNHIPVDPGQSIILGKVLLLNKNGEVTLGRPCIEGVTIKATVMRHLRGKKITVFKMKPKKKMRLKKGHRQELTRLMIDSITS.

It belongs to the bacterial ribosomal protein bL21 family. In terms of assembly, part of the 50S ribosomal subunit.

Its subcellular location is the plastid. The protein localises to the chloroplast. In terms of biological role, this protein binds to 23S rRNA. This chain is Large ribosomal subunit protein bL21c, found in Pyropia yezoensis (Susabi-nori).